The following is a 312-amino-acid chain: Lipid-translocating exporter-like protein RTA1 (312 aa).

The segment at 1-21 (MSPESKKITAHGSTSMPLSRT) is disordered. The span at 11–21 (HGSTSMPLSRT) shows a compositional bias: polar residues. The next 6 helical transmembrane spans lie at 29–49 (IPLT…FFLA), 61–81 (LSTM…YFIC), 103–123 (FITF…LLAG), 142–162 (AMIT…SFHV), 183–203 (FMMV…RSAY), and 223–243 (SLML…ILPI). Asn-258 and Asn-304 each carry an N-linked (GlcNAc...) asparagine glycan.

Belongs to the lipid-translocating exporter (LTE) (TC 9.A.26.1) family.

Its subcellular location is the membrane. The protein operates within siderophore biosynthesis. In terms of biological role, lipid-translocating exporter-like protein; part of the gene cluster that mediates the biosynthesis of hydroxamate-containing siderophores that play a critical role in virulence via intracellular iron acquisition during macrophage infection. In Ajellomyces capsulatus (Darling's disease fungus), this protein is Lipid-translocating exporter-like protein RTA1.